A 187-amino-acid chain; its full sequence is MTVSASKTAQQLKYIKDSIKTIPDYPKAGILFRDVTSLLENPKAYSASIKLLSEHYSESGVTKVVGTEARGFLFGAPVALALGVGFVPVRKPGKLPRETISESYELEYGTDTLEIHTDSIQPGDKVLVVDDLLATGGTIEATVKLIRRLGGEVVHAAFIINLPELGGEARLTQQGIHCYSLVSFDGH.

This sequence belongs to the purine/pyrimidine phosphoribosyltransferase family. As to quaternary structure, homodimer.

It localises to the cytoplasm. The enzyme catalyses AMP + diphosphate = 5-phospho-alpha-D-ribose 1-diphosphate + adenine. It participates in purine metabolism; AMP biosynthesis via salvage pathway; AMP from adenine: step 1/1. Functionally, catalyzes a salvage reaction resulting in the formation of AMP, that is energically less costly than de novo synthesis. This Yersinia pestis (strain Pestoides F) protein is Adenine phosphoribosyltransferase.